The sequence spans 418 residues: AP-3 complex subunit mu-1 (418 aa).

Positions 176–417 constitute an MHD domain; it reads NNEAYFDVVE…ITKAGKFQVR (242 aa).

Belongs to the adaptor complexes medium subunit family. As to quaternary structure, adaptor protein complex 3 (AP-3) is a heterotetramer composed of two large adaptins (delta-type subunit AP3D1 and beta-type subunit AP3B1 or AP3B2), a medium adaptin (mu-type subunit AP3M1 or AP3M2) and a small adaptin (sigma-type subunit APS1 or AP3S2). Interacts with AGAP1. AP-3 associates with the BLOC-1 complex.

It localises to the golgi apparatus. It is found in the cytoplasmic vesicle membrane. Its function is as follows. Part of the AP-3 complex, an adaptor-related complex which is not clathrin-associated. The complex is associated with the Golgi region as well as more peripheral structures. It facilitates the budding of vesicles from the Golgi membrane and may be directly involved in trafficking to lysosomes. In concert with the BLOC-1 complex, AP-3 is required to target cargos into vesicles assembled at cell bodies for delivery into neurites and nerve terminals. In Rattus norvegicus (Rat), this protein is AP-3 complex subunit mu-1 (Ap3m1).